The primary structure comprises 607 residues: Elongation factor 4 (607 aa).

Residues 11-193 (SKIRNFSIIA…QIVEKVPAPT (183 aa)) enclose the tr-type G domain. GTP-binding positions include 23 to 28 (DHGKST) and 140 to 143 (NKID).

Belongs to the TRAFAC class translation factor GTPase superfamily. Classic translation factor GTPase family. LepA subfamily.

It is found in the cell membrane. The catalysed reaction is GTP + H2O = GDP + phosphate + H(+). Functionally, required for accurate and efficient protein synthesis under certain stress conditions. May act as a fidelity factor of the translation reaction, by catalyzing a one-codon backward translocation of tRNAs on improperly translocated ribosomes. Back-translocation proceeds from a post-translocation (POST) complex to a pre-translocation (PRE) complex, thus giving elongation factor G a second chance to translocate the tRNAs correctly. Binds to ribosomes in a GTP-dependent manner. The chain is Elongation factor 4 from Bacillus anthracis (strain A0248).